Here is a 244-residue protein sequence, read N- to C-terminus: tRNA uridine(34) hydroxylase (244 aa).

One can recognise a Rhodanese domain in the interval 129-219; it reads QGRELVMLDT…GILKYFEETD (91 aa). Cys183 serves as the catalytic Cysteine persulfide intermediate.

It belongs to the TrhO family.

The enzyme catalyses uridine(34) in tRNA + AH2 + O2 = 5-hydroxyuridine(34) in tRNA + A + H2O. In terms of biological role, catalyzes oxygen-dependent 5-hydroxyuridine (ho5U) modification at position 34 in tRNAs. The sequence is that of tRNA uridine(34) hydroxylase from Bordetella bronchiseptica (strain ATCC BAA-588 / NCTC 13252 / RB50) (Alcaligenes bronchisepticus).